The primary structure comprises 80 residues: Spermatid-specific protein S2 (80 aa).

Positions 1–36 (VKSRYHQRQYRARKRYAKARRTKKPKRRPKPPRKLR) are enriched in basic residues. The disordered stretch occupies residues 1–44 (VKSRYHQRQYRARKRYAKARRTKKPKRRPKPPRKLRYAPSKKQP).

Its subcellular location is the nucleus. The protein localises to the chromosome. In terms of biological role, involved in nuclear basic protein transition: histones are replaced by spermatid specific proteins which are themselves replaced by protamines in late spermatids. This is Spermatid-specific protein S2 from Scyliorhinus canicula (Small-spotted catshark).